A 427-amino-acid chain; its full sequence is MSRSKRDNNFYSVEIGDSTFTVLKRYQNLKPIGSGAQGIVCAAYDAILERNVAIKKLSRPFQNQTHAKRAYRELVLMKCVNHKNIIGLLNVFTPQKSLEEFQDVYIVMELMDANLCQVIQMELDHERMSYLLYQMLCGIKHLHSAGIIHRDLKPSNIVVKSDCTLKILDFGLARTAGTSFMMTPYVVTRYYRAPEVILGMGYKENVDLWSVGCIMGEMVCHKILFPGRDYIDQWNKVIEQLGTPCPEFMKKLQPTVRTYVENRPKYAGYSFEKLFPDVLFPADSEHNKLKASQARDLLSKMLVIDASKRISVDEALQHPYINVWYDPSEAEAPPPKIPDKQLDEREHTIEEWKELIYKEVMDLEERTKNGVIRGQPSPLGAAVINGSQHPSSSSSVNDVSSMSTDPTLASDTDSSLEAAAGPLGCCR.

Positions 26-321 (YQNLKPIGSG…VDEALQHPYI (296 aa)) constitute a Protein kinase domain. Residues 32 to 40 (IGSGAQGIV) and lysine 55 contribute to the ATP site. Residue cysteine 116 is modified to S-nitrosocysteine. The active-site Proton acceptor is aspartate 151. Threonine 183 is modified (phosphothreonine; by MAP2K7). The TXY motif lies at 183 to 185 (TPY). Tyrosine 185 carries the phosphotyrosine; by MAP2K4 modification. 2 positions are modified to phosphoserine: methionine 301 and serine 377. Residues 371 to 427 (VIRGQPSPLGAAVINGSQHPSSSSSVNDVSSMSTDPTLASDTDSSLEAAAGPLGCCR) form a disordered region. Over residues 387 to 403 (SQHPSSSSSVNDVSSMS) the composition is skewed to low complexity. Residues 404–415 (TDPTLASDTDSS) show a composition bias toward polar residues.

Belongs to the protein kinase superfamily. CMGC Ser/Thr protein kinase family. MAP kinase subfamily. As to quaternary structure, forms a complex with MAPK8IP1 and ARHGEF28. Found in a complex with SH3RF1, RAC1, MAP3K11/MLK3, MAP2K7/MKK7 and MAPK8IP1/JIP1. Found in a complex with SH3RF1, RAC2, MAP3K7/TAK1, MAP2K7/MKK7, MAPK8IP1/JIP1 and MAPK9/JNK2. Binds to at least four scaffolding proteins, MAPK8IP1/JIP-1, MAPK8IP2/JIP-2, MAPK8IP3/JIP-3/JSAP1 and SPAG9/MAPK8IP4/JIP-4. These proteins also bind other components of the JNK signaling pathway. Interacts with TP53 and WWOX. Interacts with JAMP. Interacts with HSF1 (via D domain and preferentially with hyperphosphorylated form); this interaction occurs under both normal growth conditions and immediately upon heat shock. Interacts (phosphorylated form) with NFE2; the interaction phosphorylates NFE2 in undifferentiated cells. Interacts with NFATC4. Interacts with MECOM; regulates JNK signaling. Interacts with PIN1; this interaction mediates MAPK8 conformational changes leading to the binding of MAPK8 to its substrates. Interacts with GRIPAP1. Interacts with POU5F1; phosphorylates POU5F1 at 'Ser-355'. Interacts with STMN2, STMN3 and STMN4. Interacts with HSF4. It depends on Mg(2+) as a cofactor. Dually phosphorylated on Thr-183 and Tyr-185 by MAP2K7 and MAP2K4, which activates the enzyme. Phosphorylated by TAOK2. May be phosphorylated at Thr-183 and Tyr-185 by MAP3K1/MEKK1. Phosphorylated form is more concentrated at synapses than none-phosphorylated.

It localises to the cytoplasm. The protein resides in the nucleus. The protein localises to the synapse. The enzyme catalyses L-seryl-[protein] + ATP = O-phospho-L-seryl-[protein] + ADP + H(+). The catalysed reaction is L-threonyl-[protein] + ATP = O-phospho-L-threonyl-[protein] + ADP + H(+). Its activity is regulated as follows. Activated by threonine and tyrosine phosphorylation by either of two dual specificity kinases, MAP2K4 and MAP2K7. MAP2K4 shows a strong preference for Tyr-185 while MAP2K7 phosphorylates Tyr-183 preferentially. Inhibited by dual specificity phosphatases, such as DUSP1. Inhibited by SERPINB3. Functionally, serine/threonine-protein kinase involved in various processes such as cell proliferation, differentiation, migration, transformation and programmed cell death. Extracellular stimuli such as pro-inflammatory cytokines or physical stress stimulate the stress-activated protein kinase/c-Jun N-terminal kinase (SAP/JNK) signaling pathway. In this cascade, two dual specificity kinases MAP2K4/MKK4 and MAP2K7/MKK7 phosphorylate and activate MAPK8/JNK1. In turn, MAPK8/JNK1 phosphorylates a number of transcription factors, primarily components of AP-1 such as JUN, JDP2 and ATF2 and thus regulates AP-1 transcriptional activity. Phosphorylates the replication licensing factor CDT1, inhibiting the interaction between CDT1 and the histone H4 acetylase HBO1 to replication origins. Loss of this interaction abrogates the acetylation required for replication initiation. Promotes stressed cell apoptosis by phosphorylating key regulatory factors including p53/TP53 and Yes-associates protein YAP1. In T-cells, MAPK8 and MAPK9 are required for polarized differentiation of T-helper cells into Th1 cells. Contributes to the survival of erythroid cells by phosphorylating the antagonist of cell death BAD upon EPO stimulation. Mediates starvation-induced BCL2 phosphorylation, BCL2 dissociation from BECN1, and thus activation of autophagy. Phosphorylates STMN2 and hence regulates microtubule dynamics, controlling neurite elongation in cortical neurons. In the developing brain, through its cytoplasmic activity on STMN2, negatively regulates the rate of exit from multipolar stage and of radial migration from the ventricular zone. Phosphorylates several other substrates including heat shock factor protein 4 (HSF4), the deacetylase SIRT1, ELK1, or the E3 ligase ITCH. Phosphorylates the CLOCK-BMAL1 heterodimer and plays a role in the regulation of the circadian clock. Phosphorylates the heat shock transcription factor HSF1, suppressing HSF1-induced transcriptional activity. Phosphorylates POU5F1, which results in the inhibition of POU5F1's transcriptional activity and enhances its proteasomal degradation. Phosphorylates JUND and this phosphorylation is inhibited in the presence of MEN1. In neurons, phosphorylates SYT4 which captures neuronal dense core vesicles at synapses. Phosphorylates EIF4ENIF1/4-ET in response to oxidative stress, promoting P-body assembly. Phosphorylates SIRT6 in response to oxidative stress, stimulating its mono-ADP-ribosyltransferase activity. Phosphorylates NLRP3, promoting assembly of the NLRP3 inflammasome. Phosphorylates ALKBH5 in response to reactive oxygen species (ROS), promoting ALKBH5 sumoylation and inactivation. In terms of biological role, JNK1 isoforms display different binding patterns: beta-1 preferentially binds to c-Jun, whereas alpha-1, alpha-2, and beta-2 have a similar low level of binding to both c-Jun or ATF2. However, there is no correlation between binding and phosphorylation, which is achieved at about the same efficiency by all isoforms. The polypeptide is Mitogen-activated protein kinase 8 (MAPK8) (Homo sapiens (Human)).